Consider the following 178-residue polypeptide: uncharacterized protein (178 aa).

An N-terminal signal peptide occupies residues 1–19; it reads MKKNIHILGASGVGTSTLG.

This is an uncharacterized protein from Bacillus subtilis (strain 168).